A 949-amino-acid polypeptide reads, in one-letter code: ATPase 5, plasma membrane-type (949 aa).

The residue at position 2 (S2) is an N-acetylserine. The Cytoplasmic portion of the chain corresponds to 2–61 (SELDHIKNESVDLVRIPMEEVFEELKCTKQGLTANEASHRLDVFGPNKLEEKKESKLLKF). A helical membrane pass occupies residues 62–81 (LGFMWNPLSWVMEVAALMAI). The Extracellular portion of the chain corresponds to 82–93 (ALANGGGRPPDW). Residues 94-114 (QDFVGIVCLLLINSTISFIEE) traverse the membrane as a helical segment. Over 115–243 (NNAGNAAAAL…GHFQKVLTSI (129 aa)) the chain is Cytoplasmic. The helical transmembrane segment at 244–264 (GNFCICSIALGIIVELLVMYP) threads the bilayer. Residues 265–273 (IQRRRYRDG) are Extracellular-facing. Residues 274 to 291 (IDNLLVLLIGGIPIAMPS) form a helical membrane-spanning segment. The Cytoplasmic portion of the chain corresponds to 292-643 (VLSVTMATGS…TSRAIFQRMK (352 aa)). D329 (4-aspartylphosphate intermediate) is an active-site residue. Residues D588 and D592 each coordinate Mg(2+). A helical membrane pass occupies residues 644 to 665 (NYTIYAVSITIRIVFGFMFIAL). At 666-670 (IWQFD) the chain is on the extracellular side. A helical transmembrane segment spans residues 671 to 693 (FSPFMVLIIAILNDGTIMTISKD). The Cytoplasmic segment spans residues 694–709 (RMKPSPQPDSWKLRDI). The chain crosses the membrane as a helical span at residues 710–730 (FSTGVVLGGYQALMTVVFFWV). Residues 731–751 (MKDSDFFSNYFGVRPLSQRPE) lie on the Extracellular side of the membrane. The chain crosses the membrane as a helical span at residues 752–772 (QMMAALYLQVSIISQALIFVT). The Cytoplasmic portion of the chain corresponds to 773 to 784 (RSRSWSYAECPG). A helical membrane pass occupies residues 785-805 (LLLLGAFVIAQLVATFIAVYA). At 806–813 (NWSFARIE) the chain is on the extracellular side. A helical membrane pass occupies residues 814–834 (GAGWGWAGVIWLYSFLTYIPL). Over 835–949 (DLLKFGIRYV…IDTIQQHYTV (115 aa)) the chain is Cytoplasmic. Phosphothreonine is present on T881. Phosphoserine is present on residues S899 and S931. Positions 947–949 (YTV) are interaction with 14-3-3 proteins. Position 948 is a phosphothreonine (T948).

This sequence belongs to the cation transport ATPase (P-type) (TC 3.A.3) family. Type IIIA subfamily. As to quaternary structure, binds to 14-3-3 proteins. The binding is induced by phosphorylation of Thr-948. Binding to 14-3-3 proteins activates the H(+)-ATPase. Expressed in guard cells and leaves.

It localises to the membrane. The catalysed reaction is ATP + H2O + H(+)(in) = ADP + phosphate + 2 H(+)(out). Its function is as follows. The plasma membrane H(+) ATPase of plants and fungi generates a proton gradient that drives the active transport of nutrients by H(+)-symport. The resulting external acidification and/or internal alkinization may mediate growth responses. The protein is ATPase 5, plasma membrane-type (AHA5) of Arabidopsis thaliana (Mouse-ear cress).